A 250-amino-acid polypeptide reads, in one-letter code: Small ribosomal subunit protein uS3 (250 aa).

Residues 39-111 (IRQLINNFSK…DINLNILEVK (73 aa)) enclose the KH type-2 domain.

The protein belongs to the universal ribosomal protein uS3 family. As to quaternary structure, part of the 30S ribosomal subunit. Forms a tight complex with proteins S10 and S14.

Its function is as follows. Binds the lower part of the 30S subunit head. Binds mRNA in the 70S ribosome, positioning it for translation. The protein is Small ribosomal subunit protein uS3 of Phytoplasma australiense.